We begin with the raw amino-acid sequence, 495 residues long: Cytochrome P450 2E1 (495 aa).

298 to 303 (FAGTET) provides a ligand contact to substrate. Cysteine 437 contributes to the heme binding site.

This sequence belongs to the cytochrome P450 family. In terms of assembly, interacts with chaperones HSP70 and HSP90; this interaction is required for initial targeting to mitochondria. Requires heme as cofactor.

The protein resides in the endoplasmic reticulum membrane. The protein localises to the microsome membrane. It is found in the mitochondrion inner membrane. It catalyses the reaction an organic molecule + reduced [NADPH--hemoprotein reductase] + O2 = an alcohol + oxidized [NADPH--hemoprotein reductase] + H2O + H(+). It carries out the reaction (5Z,8Z,11Z)-eicosatrienoate + reduced [NADPH--hemoprotein reductase] + O2 = 19-hydroxy-(5Z,8Z,11Z)-eicosatrienoate + oxidized [NADPH--hemoprotein reductase] + H2O + H(+). The enzyme catalyses (5Z,8Z,11Z,14Z,17Z)-eicosapentaenoate + reduced [NADPH--hemoprotein reductase] + O2 = 19-hydroxy-(5Z,8Z,11Z,14Z,17Z)-eicosapentaenoate + oxidized [NADPH--hemoprotein reductase] + H2O + H(+). The catalysed reaction is (4Z,7Z,10Z,13Z,16Z,19Z)-docosahexaenoate + reduced [NADPH--hemoprotein reductase] + O2 = 21-hydroxy-(4Z,7Z,10Z,13Z,16Z,19Z)-docosahexaenoate + oxidized [NADPH--hemoprotein reductase] + H2O + H(+). It catalyses the reaction dodecanoate + reduced [NADPH--hemoprotein reductase] + O2 = 11-hydroxydodecanoate + oxidized [NADPH--hemoprotein reductase] + H2O + H(+). It carries out the reaction tetradecanoate + reduced [NADPH--hemoprotein reductase] + O2 = 13-hydroxytetradecanoate + oxidized [NADPH--hemoprotein reductase] + H2O + H(+). The enzyme catalyses 4-nitrophenol + NADPH + O2 + H(+) = 4-nitrocatechol + NADP(+) + H2O. The protein operates within lipid metabolism; fatty acid metabolism. The omega-1 hydroxylase activity is stimulated by cytochrome b5. Its function is as follows. A cytochrome P450 monooxygenase involved in the metabolism of fatty acids. Mechanistically, uses molecular oxygen inserting one oxygen atom into a substrate, and reducing the second into a water molecule, with two electrons provided by NADPH via cytochrome P450 reductase (NADPH--hemoprotein reductase). Catalyzes the hydroxylation of carbon-hydrogen bonds. Hydroxylates fatty acids specifically at the omega-1 position displaying the highest catalytic activity for saturated fatty acids. May be involved in the oxidative metabolism of xenobiotics. The protein is Cytochrome P450 2E1 (CYP2E1) of Sus scrofa (Pig).